The sequence spans 482 residues: Hydrogenase transcriptional regulatory protein HoxA (482 aa).

Residues 7–121 (TVLVVDDETR…HLIDTVRQAV (115 aa)) form the Response regulatory domain. Asp-55 carries the 4-aspartylphosphate modification. Residues 167–394 (APGSPLDAVC…LRNEIYRAVA (228 aa)) form the Sigma-54 factor interaction domain. ATP-binding positions include 193–200 (GESGTGKE) and 265–274 (EIGDTSPAFQ). The H-T-H motif DNA-binding region spans 456–475 (KTHAAKELGLSRVGLRQKLL).

Its subcellular location is the cytoplasm. Its function is as follows. Probable member of the two-component regulatory system involved in the regulation of the hydrogenase activity. HoxA is probably phosphorylated by a sensory component (which could be HoxX) and then acts in conjunction with sigma-54 as a transcriptional activator. The sequence is that of Hydrogenase transcriptional regulatory protein HoxA (hoxA) from Cupriavidus necator (strain ATCC 17699 / DSM 428 / KCTC 22496 / NCIMB 10442 / H16 / Stanier 337) (Ralstonia eutropha).